We begin with the raw amino-acid sequence, 235 residues long: Myb family transcription factor PHL12 (235 aa).

Residues 1–12 (MMQSREEIRDDS) are compositionally biased toward basic and acidic residues. Positions 1–20 (MMQSREEIRDDSSSGLVLTT) are disordered. The HTH myb-type domain occupies 20–80 (TDPKPRLRWT…HLQKFRLGKQ (61 aa)). The H-T-H motif DNA-binding region spans 51 to 76 (PKTIMRVMGVKGLTLYHLKSHLQKFR). The segment at 119 to 139 (RNMNEMQMEVQRRIEEEVVIE) is coiled coil.

It belongs to the MYB-CC family. Expressed in phloem and/or cambium.

The protein resides in the nucleus. This is Myb family transcription factor PHL12 from Arabidopsis thaliana (Mouse-ear cress).